The following is a 727-amino-acid chain: ADP-ribosylation factor-binding protein GGA3 (727 aa).

In terms of domain architecture, VHS spans A16–S146. A phosphoserine mark is found at S159 and S275. In terms of domain architecture, GAT spans D171–E298. A unstructured hinge region spans residues G299–P597. Residues T334 to N385 form a disordered region. Positions A343–S363 are enriched in pro residues. Low complexity predominate over residues G364–A374. Positions D391–L395 match the DXXLL motif. The tract at residues S400–F419 is disordered. The GAE domain maps to S598 to P719.

This sequence belongs to the GGA protein family. As to quaternary structure, monomer. Interacts with GGA1 and GGA2. Binds to clathrin and activated ARFs, such as ARF1, ARF5 and ARF6. Binds RABEP1 and RABGEF1. Interacts with the membrane proteins M6PR/CD-MPR and IGF2R/CI-MPR and the accessory proteins SYNRG, EPN4, NECAP1, NECAP2 and AFTPH/aftiphilin. Interacts with TSG101 and UBC. Interacts with ADRA2B. Interacts with NTRK1; the interaction is independent of NTRK1 activation and ubiquitination. Interacts (via VHS domain) with BACE1 (via DXXLL motif). Post-translationally, phosphorylated by CK2 and dephosphorylated by PP2A. Phosphorylation of GGA3 allows the internal DXXLL motif to bind the VHS domain and to inhibit the recognition of cargo signals. Ubiquitinated. In terms of processing, proteolytically cleaved during apoptosis by CASP3.

It localises to the golgi apparatus. The protein resides in the trans-Golgi network membrane. It is found in the endosome membrane. Its subcellular location is the early endosome membrane. The protein localises to the recycling endosome membrane. Functionally, plays a role in protein sorting and trafficking between the trans-Golgi network (TGN) and endosomes. Mediates the ARF-dependent recruitment of clathrin to the TGN and binds ubiquitinated proteins and membrane cargo molecules with a cytosolic acidic cluster-dileucine (DXXLL) motif. Mediates export of the GPCR receptor ADRA2B to the cell surface. Involved in BACE1 transport and sorting as well as regulation of BACE1 protein levels. Regulates retrograde transport of BACE1 from endosomes to the trans-Golgi network via interaction through the VHS motif and dependent of BACE1 phosphorylation. Modulates BACE1 protein levels independently of the interaction between VHS domain and DXXLL motif through recognition of ubiquitination. Key player in a novel DXXLL-mediated endosomal sorting machinery to the recycling pathway that targets NTRK1 to the plasma membrane. This is ADP-ribosylation factor-binding protein GGA3 from Rattus norvegicus (Rat).